Here is a 497-residue protein sequence, read N- to C-terminus: Keratin, type II cytoskeletal 8 (497 aa).

The interval 2-108 is head; sequence TSYQRTVTVR…DPRIGQVRLE (107 aa). Positions 109–149 are coil 1A; the sequence is EKEQIKTLNNQFAGFIDKVRYLEQQNKLLETKWQLLQNQTT. Residues 109–421 enclose the IF rod domain; that stretch reads EKEQIKTLNN…KLLEGEESRL (313 aa). The segment at 145–162 is linker 1; the sequence is QNQTTPSRSNLDSMFEAY. A coil 1B region spans residues 163 to 254; sequence ISNLRRQLDT…QIYDEEIREL (92 aa). The tract at residues 255–278 is linker 12; that stretch reads QTQIQDTSVIVQMDNNRQLDLDNI. The coil 2 stretch occupies residues 279-417; the sequence is IAEVRAQYED…ATYRKLLEGE (139 aa). Positions 418-497 are tail; it reads ESRLASGIQA…VSERSNIVKE (80 aa).

Belongs to the intermediate filament family. Heterotetramer of two type I and two type II keratins. Keratin-8 associates with keratin-18. In terms of tissue distribution, expressed in skin.

The protein resides in the cytoplasm. Its subcellular location is the nucleus. The protein localises to the nucleoplasm. It is found in the nucleus matrix. Together with KRT19, helps to link the contractile apparatus to dystrophin at the costameres of striated muscle. In Protopterus aethiopicus (Marbled lungfish), this protein is Keratin, type II cytoskeletal 8.